The following is a 239-amino-acid chain: Flagellin B3 (239 aa).

The propeptide occupies 1 to 11 (MLKNFMKNKKG). Residues Asn-115 and Asn-128 are each glycosylated (N-linked (GlcNAc...) asparagine).

It belongs to the archaeal flagellin family. N-linked glycans consist of the 779 Da trisaccharide beta-ManNAc(Thr)-(1-4)-beta-GlcNAc3NAcA-(1-3)-beta-GlcNAc.

It localises to the archaeal flagellum. Flagellin is the subunit protein which polymerizes to form the filaments of archaeal flagella. This chain is Flagellin B3 (flaB3), found in Methanococcus voltae.